A 217-amino-acid chain; its full sequence is GTP cyclohydrolase 1 (217 aa).

Zn(2+) contacts are provided by Cys109, His112, and Cys180.

It belongs to the GTP cyclohydrolase I family. As to quaternary structure, toroid-shaped homodecamer, composed of two pentamers of five dimers.

The catalysed reaction is GTP + H2O = 7,8-dihydroneopterin 3'-triphosphate + formate + H(+). Its pathway is cofactor biosynthesis; 7,8-dihydroneopterin triphosphate biosynthesis; 7,8-dihydroneopterin triphosphate from GTP: step 1/1. The protein is GTP cyclohydrolase 1 of Aliivibrio fischeri (strain ATCC 700601 / ES114) (Vibrio fischeri).